The primary structure comprises 564 residues: Nucleoprotein (564 aa).

Residues 54–236 (LRKTKRGEED…VTKDESSINI (183 aa)) are binding site for the cap structure m7GTP. Mn(2+) contacts are provided by D380 and E382. 4 residues coordinate Zn(2+): E390, C497, H500, and C525. D529 is a Mn(2+) binding site.

This sequence belongs to the arenaviridae nucleocapsid protein family. As to quaternary structure, homomultimerizes to form the nucleocapsid. Binds to viral genomic RNA. Interacts with glycoprotein G2. Interacts with protein Z; this interaction probably directs the encapsidated genome to budding sites. Interacts with protein L; this interaction does not interfere with Z-L interaction. Interacts with host IKBKE (via Protein kinase domain); the interaction inhibits IKBKE kinase activity.

Its subcellular location is the virion. The protein localises to the host cytoplasm. Its function is as follows. Encapsidates the genome, protecting it from nucleases. The encapsidated genomic RNA is termed the nucleocapsid (NC). Serves as template for viral transcription and replication. The increased presence of protein N in host cell does not seem to trigger the switch from transcription to replication as observed in other negative strain RNA viruses. Through the interaction with host IKBKE, strongly inhibits the phosphorylation and nuclear translocation of host IRF3, a protein involved in interferon activation pathway, leading to the inhibition of interferon-beta and IRF3-dependent promoters activation. Also encodes a functional 3'-5' exoribonuclease that degrades preferentially dsRNA substrates and thereby participates in the suppression of interferon induction. This chain is Nucleoprotein, found in Akodon azarae (Azara's grass mouse).